Reading from the N-terminus, the 382-residue chain is Glutamyl-tRNA reductase (382 aa).

Substrate-binding positions include 38–41 (TCNR), Ser-85, 90–92 (ENQ), and Gln-96. Cys-39 functions as the Nucleophile in the catalytic mechanism. 164 to 169 (GAGEIG) lines the NADP(+) pocket.

It belongs to the glutamyl-tRNA reductase family. In terms of assembly, homodimer.

It catalyses the reaction (S)-4-amino-5-oxopentanoate + tRNA(Glu) + NADP(+) = L-glutamyl-tRNA(Glu) + NADPH + H(+). Its pathway is porphyrin-containing compound metabolism; protoporphyrin-IX biosynthesis; 5-aminolevulinate from L-glutamyl-tRNA(Glu): step 1/2. In terms of biological role, catalyzes the NADPH-dependent reduction of glutamyl-tRNA(Glu) to glutamate 1-semialdehyde (GSA). This is Glutamyl-tRNA reductase from Methanococcus maripaludis (strain DSM 14266 / JCM 13030 / NBRC 101832 / S2 / LL).